Here is a 220-residue protein sequence, read N- to C-terminus: Large ribosomal subunit protein uL6c (220 aa).

The transit peptide at 1 to 38 (MSLPLPSHMKSVFLGMKVEISTSVPVTRIGFWRKSVDC) directs the protein to the chloroplast.

Component of the chloroplast large ribosomal subunit (LSU). Mature 70S chloroplast ribosomes of higher plants consist of a small (30S) and a large (50S) subunit. The 30S small subunit contains 1 molecule of ribosomal RNA (16S rRNA) and 24 different proteins. The 50S large subunit contains 3 rRNA molecules (23S, 5S and 4.5S rRNA) and 33 different proteins.

It is found in the plastid. Its subcellular location is the chloroplast. Its function is as follows. Component of the chloroplast ribosome (chloro-ribosome), a dedicated translation machinery responsible for the synthesis of chloroplast genome-encoded proteins, including proteins of the transcription and translation machinery and components of the photosynthetic apparatus. This Spinacia oleracea (Spinach) protein is Large ribosomal subunit protein uL6c (RPL6).